The following is a 300-amino-acid chain: ETS homologous factor (300 aa).

Residues 29 to 115 (PTCNVSSGFF…SNLQHLKWNG (87 aa)) enclose the PNT domain. Positions 181 to 203 (VAESPDMKKEQDHPVKSHTKKHN) are disordered. The span at 185–195 (PDMKKEQDHPV) shows a compositional bias: basic and acidic residues. A DNA-binding region (ETS) is located at residues 207–289 (THLWEFIRDI…DGRRLVYKFG (83 aa)).

The protein belongs to the ETS family. Highly expressed in kidney and lung, weakly in skeletal muscle, heart, and liver, and not detected in brain, spleen or testis.

The protein resides in the nucleus. Transcriptional activator that may play a role in regulating epithelial cell differentiation and proliferation. May act as a repressor for a specific subset of ETS/AP-1-responsive genes, and as a modulator of the nuclear response to mitogen-activated protein kinase signaling cascades. Binds to DNA sequences containing the consensus nucleotide core sequence GGAA. Involved in regulation of TNFRSF10B/DR5 expression through Ets-binding sequences on the TNFRSF10B/DR5 promoter. In Mus musculus (Mouse), this protein is ETS homologous factor.